A 202-amino-acid chain; its full sequence is ATP-dependent Clp protease proteolytic subunit (202 aa).

The Nucleophile role is filled by Ser-106. Residue His-131 is part of the active site.

Belongs to the peptidase S14 family. In terms of assembly, fourteen ClpP subunits assemble into 2 heptameric rings which stack back to back to give a disk-like structure with a central cavity, resembling the structure of eukaryotic proteasomes.

Its subcellular location is the cytoplasm. The enzyme catalyses Hydrolysis of proteins to small peptides in the presence of ATP and magnesium. alpha-casein is the usual test substrate. In the absence of ATP, only oligopeptides shorter than five residues are hydrolyzed (such as succinyl-Leu-Tyr-|-NHMec, and Leu-Tyr-Leu-|-Tyr-Trp, in which cleavage of the -Tyr-|-Leu- and -Tyr-|-Trp bonds also occurs).. Cleaves peptides in various proteins in a process that requires ATP hydrolysis. Has a chymotrypsin-like activity. Plays a major role in the degradation of misfolded proteins. The chain is ATP-dependent Clp protease proteolytic subunit from Shewanella sp. (strain W3-18-1).